The following is a 268-amino-acid chain: Tryptophan synthase alpha chain (268 aa).

Active-site proton acceptor residues include glutamate 49 and aspartate 60.

Belongs to the TrpA family. As to quaternary structure, tetramer of two alpha and two beta chains.

It carries out the reaction (1S,2R)-1-C-(indol-3-yl)glycerol 3-phosphate + L-serine = D-glyceraldehyde 3-phosphate + L-tryptophan + H2O. The protein operates within amino-acid biosynthesis; L-tryptophan biosynthesis; L-tryptophan from chorismate: step 5/5. Its function is as follows. The alpha subunit is responsible for the aldol cleavage of indoleglycerol phosphate to indole and glyceraldehyde 3-phosphate. The sequence is that of Tryptophan synthase alpha chain from Sodalis glossinidius (strain morsitans).